A 333-amino-acid polypeptide reads, in one-letter code: D-glutamate N-acetyltransferase (333 aa).

Belongs to the N-acetyltransferase DgcN family.

The enzyme catalyses D-glutamate + acetyl-CoA = N-acetyl-D-glutamate + CoA + H(+). Its pathway is amino-acid degradation. In terms of biological role, N-acetyltransferase involved in a deamination-independent D-glutamate degradation pathway, named the DgcN-DgcA pathway. Catalyzes the transfer of the acetyl moiety from acetyl-CoA to D-glutamate to generate N-acetyl-D-glutamate. The polypeptide is D-glutamate N-acetyltransferase (Tritonibacter scottomollicae (Epibacterium scottomollicae)).